Reading from the N-terminus, the 288-residue chain is 4-diphosphocytidyl-2-C-methyl-D-erythritol kinase (288 aa).

Residue Lys8 is part of the active site. 90–100 provides a ligand contact to ATP; that stretch reads PVGAGLAGGSS. Asp132 is a catalytic residue.

Belongs to the GHMP kinase family. IspE subfamily.

The catalysed reaction is 4-CDP-2-C-methyl-D-erythritol + ATP = 4-CDP-2-C-methyl-D-erythritol 2-phosphate + ADP + H(+). The protein operates within isoprenoid biosynthesis; isopentenyl diphosphate biosynthesis via DXP pathway; isopentenyl diphosphate from 1-deoxy-D-xylulose 5-phosphate: step 3/6. In terms of biological role, catalyzes the phosphorylation of the position 2 hydroxy group of 4-diphosphocytidyl-2C-methyl-D-erythritol. In Chlamydia trachomatis serovar A (strain ATCC VR-571B / DSM 19440 / HAR-13), this protein is 4-diphosphocytidyl-2-C-methyl-D-erythritol kinase.